The following is a 371-amino-acid chain: Sporulation-specific protein 2 (371 aa).

Its subcellular location is the spore wall. In terms of biological role, essential for sporulation and seems to have a role at the time of, or after, initiation of nuclear division. Appears to have a role in outer spore wall formation. In Saccharomyces cerevisiae (strain ATCC 204508 / S288c) (Baker's yeast), this protein is Sporulation-specific protein 2 (SSP2).